The sequence spans 109 residues: MEDRVEISMLMDFYSSLLTEKQRSVMALYYDDDLSLAEIAELNKTSRQAIHDLIKRCDKQLLSYESKLNLLQKSMRKEKYIMNFLEELKEKYSVSDKDYLMFKEKLENL.

It belongs to the UPF0122 family.

In terms of biological role, might take part in the signal recognition particle (SRP) pathway. This is inferred from the conservation of its genetic proximity to ftsY/ffh. May be a regulatory protein. In Clostridium botulinum (strain Eklund 17B / Type B), this protein is UPF0122 protein CLL_A1244.